We begin with the raw amino-acid sequence, 72 residues long: Protein RALF-like 12 (72 aa).

Positions 1-17 (MKAWVIGLLVICAVVIA) are cleaved as a signal peptide. 2 cysteine pairs are disulfide-bonded: C34-C43 and C63-C69. Positions 37–60 (PNPPPGCNPPGTEQKNPTPVNEYS) are disordered.

It belongs to the plant rapid alkalinization factor (RALF) family.

It is found in the secreted. In terms of biological role, cell signaling peptide that may regulate plant stress, growth, and development. Mediates a rapid alkalinization of extracellular space by mediating a transient increase in the cytoplasmic Ca(2+) concentration leading to a calcium-dependent signaling events through a cell surface receptor and a concomitant activation of some intracellular mitogen-activated protein kinases. In Arabidopsis thaliana (Mouse-ear cress), this protein is Protein RALF-like 12 (RALFL12).